The chain runs to 142 residues: Hemoglobin subunit alpha (142 aa).

At Ser1 the chain carries N-acetylserine. The Globin domain occupies 1–142; it reads SLTAKSKSIV…VASALSEKYR (142 aa). His59 lines the O2 pocket. His88 lines the heme b pocket.

The protein belongs to the globin family. In terms of assembly, heterotetramer of two alpha chains and two beta chains. Red blood cells.

Functionally, involved in oxygen transport from gills to the various peripheral tissues. This Electrophorus electricus (Electric eel) protein is Hemoglobin subunit alpha (hba).